Reading from the N-terminus, the 598-residue chain is Polypeptide N-acetylgalactosaminyltransferase 17 (598 aa).

The Cytoplasmic portion of the chain corresponds to 1–6; it reads MASLRR. The chain crosses the membrane as a helical; Signal-anchor for type II membrane protein span at residues 7-27; that stretch reads VKVLLVLNLIAVAGFVLFLAK. At 28-598 the chain is on the lumenal side; it reads CRPIAVRSGD…QRWTIKNSIK (571 aa). An N-linked (GlcNAc...) asparagine glycan is attached at asparagine 50. Disulfide bonds link cysteine 142–cysteine 373 and cysteine 364–cysteine 443. Positions 151-262 are catalytic subdomain A; it reads LPQISIIFIF…AGWAEPVLSR (112 aa). Residues aspartate 192 and arginine 223 each contribute to the substrate site. Mn(2+)-binding residues include aspartate 246, histidine 248, and histidine 378. The segment at 319–381 is catalytic subdomain B; that stretch reads PIRTPAMIGC…PCSRVAHIER (63 aa). The substrate site is built by arginine 381 and tyrosine 386. Asparagine 461 and asparagine 486 each carry an N-linked (GlcNAc...) asparagine glycan. Residues 465 to 594 form the Ricin B-type lectin domain; sequence AYGELRNNKA…SCTGQRWTIK (130 aa). Cystine bridges form between cysteine 478/cysteine 494, cysteine 526/cysteine 541, and cysteine 568/cysteine 586.

Belongs to the glycosyltransferase 2 family. GalNAc-T subfamily. Requires Mn(2+) as cofactor. Highly expressed in brain and heart. Weakly expressed in kidney, liver, lung and spleen.

It localises to the golgi apparatus membrane. The enzyme catalyses L-seryl-[protein] + UDP-N-acetyl-alpha-D-galactosamine = a 3-O-[N-acetyl-alpha-D-galactosaminyl]-L-seryl-[protein] + UDP + H(+). It carries out the reaction L-threonyl-[protein] + UDP-N-acetyl-alpha-D-galactosamine = a 3-O-[N-acetyl-alpha-D-galactosaminyl]-L-threonyl-[protein] + UDP + H(+). The protein operates within protein modification; protein glycosylation. Functionally, may catalyze the initial reaction in O-linked oligosaccharide biosynthesis, the transfer of an N-acetyl-D-galactosamine residue to a serine or threonine residue on the protein receptor. In Homo sapiens (Human), this protein is Polypeptide N-acetylgalactosaminyltransferase 17.